A 390-amino-acid polypeptide reads, in one-letter code: Succinate--CoA ligase [ADP-forming] subunit beta (390 aa).

The 236-residue stretch at 9 to 244 folds into the ATP-grasp domain; that stretch reads KEIFRKYGVP…LDEEEPTEVE (236 aa). ATP contacts are provided by residues lysine 46, 53-55, glutamate 99, alanine 102, and glutamate 107; that span reads GRG. The Mg(2+) site is built by asparagine 199 and aspartate 213. Substrate is bound by residues asparagine 264 and 321–323; that span reads GIV.

The protein belongs to the succinate/malate CoA ligase beta subunit family. In terms of assembly, heterotetramer of two alpha and two beta subunits. The cofactor is Mg(2+).

The enzyme catalyses succinate + ATP + CoA = succinyl-CoA + ADP + phosphate. It carries out the reaction GTP + succinate + CoA = succinyl-CoA + GDP + phosphate. The protein operates within carbohydrate metabolism; tricarboxylic acid cycle; succinate from succinyl-CoA (ligase route): step 1/1. Succinyl-CoA synthetase functions in the citric acid cycle (TCA), coupling the hydrolysis of succinyl-CoA to the synthesis of either ATP or GTP and thus represents the only step of substrate-level phosphorylation in the TCA. The beta subunit provides nucleotide specificity of the enzyme and binds the substrate succinate, while the binding sites for coenzyme A and phosphate are found in the alpha subunit. This chain is Succinate--CoA ligase [ADP-forming] subunit beta, found in Nautilia profundicola (strain ATCC BAA-1463 / DSM 18972 / AmH).